Reading from the N-terminus, the 236-residue chain is 2-C-methyl-D-erythritol 4-phosphate cytidylyltransferase (236 aa).

The protein belongs to the IspD/TarI cytidylyltransferase family. IspD subfamily.

The enzyme catalyses 2-C-methyl-D-erythritol 4-phosphate + CTP + H(+) = 4-CDP-2-C-methyl-D-erythritol + diphosphate. It participates in isoprenoid biosynthesis; isopentenyl diphosphate biosynthesis via DXP pathway; isopentenyl diphosphate from 1-deoxy-D-xylulose 5-phosphate: step 2/6. Functionally, catalyzes the formation of 4-diphosphocytidyl-2-C-methyl-D-erythritol from CTP and 2-C-methyl-D-erythritol 4-phosphate (MEP). In Azoarcus sp. (strain BH72), this protein is 2-C-methyl-D-erythritol 4-phosphate cytidylyltransferase.